The primary structure comprises 307 residues: MKVSHHLYDQLSRITSEENVMVDELIRNHTYTKLGGKADVYITPESYSEVQDIIKLANKEDVPFTMLGNGSNLIVKDGGIRGIVMNLQKLASIWREEDKIIAQSGARIIDASRTALAESLAGLEFACGIPGSVGGALYMNAGAYGGEIKDVLESTIVVTKEGDIRTLTAVELDLDYRTSNIPDKGYIVLEATFALKKANSSDIKEVMDDLTYKRESKQPLEYPSCGSVFKRPPGYFAGKLIQDSELQGTQIGGAEVSKKHAGFIVNKNNASATEYINLIRHVQKTVSEKFGVQLEREVRIIGEDPVE.

In terms of domain architecture, FAD-binding PCMH-type spans Leu34–Ala198. The active site involves Arg177. Ser227 functions as the Proton donor in the catalytic mechanism. Glu297 is a catalytic residue.

The protein belongs to the MurB family. FAD is required as a cofactor.

The protein localises to the cytoplasm. It catalyses the reaction UDP-N-acetyl-alpha-D-muramate + NADP(+) = UDP-N-acetyl-3-O-(1-carboxyvinyl)-alpha-D-glucosamine + NADPH + H(+). It functions in the pathway cell wall biogenesis; peptidoglycan biosynthesis. Its function is as follows. Cell wall formation. The sequence is that of UDP-N-acetylenolpyruvoylglucosamine reductase from Oceanobacillus iheyensis (strain DSM 14371 / CIP 107618 / JCM 11309 / KCTC 3954 / HTE831).